Here is a 217-residue protein sequence, read N- to C-terminus: MSEAMMWLLVRGVWETLAMTFVSGFFGFVIGLPVGVLLYVTRPGQIMENARLYRSLSAVVNIFRSIPFIILLVWMIPFTRIIVGTSIGLQAAIVPLTVGAAPFIARMVENALLEIPAGLIEASRAMGATPLQIVRKILLPEALPGLVNAATITLITLVGYSAMGGAVGAGGLGQIGYQYGYIGYNATVMNTVLVLLVVLVYLIQLSGDRIVRAVTHK.

Topologically, residues 1-19 (MSEAMMWLLVRGVWETLAM) are periplasmic. The ABC transmembrane type-1 domain maps to 13-204 (VWETLAMTFV…LLVVLVYLIQ (192 aa)). Residues 20 to 40 (TFVSGFFGFVIGLPVGVLLYV) traverse the membrane as a helical segment. The Cytoplasmic portion of the chain corresponds to 41–54 (TRPGQIMENARLYR). Residues 55–77 (SLSAVVNIFRSIPFIILLVWMIP) traverse the membrane as a helical segment. At 78 to 92 (FTRIIVGTSIGLQAA) the chain is on the periplasmic side. Residues 93–113 (IVPLTVGAAPFIARMVENALL) form a helical membrane-spanning segment. Residues 114–151 (EIPAGLIEASRAMGATPLQIVRKILLPEALPGLVNAAT) lie on the Cytoplasmic side of the membrane. A helical membrane pass occupies residues 152–172 (ITLITLVGYSAMGGAVGAGGL). The Periplasmic portion of the chain corresponds to 173-185 (GQIGYQYGYIGYN). Residues 186–206 (ATVMNTVLVLLVVLVYLIQLS) form a helical membrane-spanning segment. Topologically, residues 207-217 (GDRIVRAVTHK) are cytoplasmic.

The protein belongs to the binding-protein-dependent transport system permease family. CysTW subfamily.

The protein localises to the cell inner membrane. Its function is as follows. Part of the binding-protein-dependent transport system for D-methionine and the toxic methionine analog alpha-methyl-methionine. Probably responsible for the translocation of the substrate across the membrane. In Salmonella typhimurium (strain LT2 / SGSC1412 / ATCC 700720), this protein is D-methionine transport system permease protein MetI (metI).